The chain runs to 552 residues: Outer dynein arm protein 1 (552 aa).

Positions 1–27 (MPSADATRGGGSAGSMGKGTLGAGDTL) are disordered. The segment covering 8 to 22 (RGGGSAGSMGKGTLG) has biased composition (gly residues). 3 coiled-coil regions span residues 28 to 59 (GHKSVLDKQRAAIEKLRAQNEQLKTELLLENK), 120 to 260 (SAKE…QELL), and 331 to 395 (TLFN…YEKR). 2 disordered regions span residues 482–515 (NRIIIEPPSTTQEEEVEGLEPEPVEEDRPLTREH) and 528–552 (LETAIKVRPAGADATGGKRGSPTRR). Residues 493 to 506 (QEEEVEGLEPEPVE) are compositionally biased toward acidic residues.

It belongs to the ODA1/DCC2 family. Component of the outer dynein arm complex.

Its subcellular location is the cytoplasm. It is found in the cytoskeleton. It localises to the cilium axoneme. Component of the outer dynein arm complex required for assembly of the outer dynein arm-docking complex (ODA-DC) and the outer dynein arm onto the doublet microtubule. The protein is Outer dynein arm protein 1 (ODA1) of Chlamydomonas reinhardtii (Chlamydomonas smithii).